The sequence spans 342 residues: Autoinducer 2 import system permease protein LsrC (342 aa).

At 1–13 the chain is on the periplasmic side; the sequence is MLKFIQNNREITA. A helical membrane pass occupies residues 14–34; sequence LLAVLLLFVLPGFLDRQYLSV. Residues 35–38 are Cytoplasmic-facing; sequence QTLT. The helical transmembrane segment at 39–59 threads the bilayer; sequence MVYSSAQILILLAMGATLVML. At 60–69 the chain is on the periplasmic side; sequence TRNIDVSVGS. Residues 70-90 form a helical membrane-spanning segment; it reads ITGMCAVLLGMLLNAGYSLPV. The Cytoplasmic portion of the chain corresponds to 91–92; it reads AC. A helical transmembrane segment spans residues 93 to 113; the sequence is VATLLLGLLAGFFNGVLVAWL. Residue K114 is a topological domain, periplasmic. Residues 115–135 traverse the membrane as a helical segment; the sequence is IPAIVATLGTLGLYRGIMLLW. The Cytoplasmic segment spans residues 136 to 154; sequence TGGKWIEGLPAELKQLSAP. A helical membrane pass occupies residues 155–175; sequence LLLGVSAIGWLTIILVAFMAW. Topologically, residues 176 to 212 are periplasmic; the sequence is LLAKTAFGRSFYATGDNLQGARQLGVRTEAIRIVAFS. Residues 213 to 233 traverse the membrane as a helical segment; the sequence is LNGCMAALAGIVFASQIGFIP. At 234-251 the chain is on the cytoplasmic side; the sequence is NQTGTGLEMKAIAACVLG. The chain crosses the membrane as a helical span at residues 252–272; the sequence is GISLLGGSGAIIGAVLGAWFL. The Periplasmic segment spans residues 273-283; sequence TQIDSVLVLLR. The helical transmembrane segment at 284–304 threads the bilayer; sequence IPAWWNDFIAGLVLLAVLVFD. Topologically, residues 305–342 are cytoplasmic; that stretch reads GRLRCALELNLRRQKYARFMTPPPSVKPASSGKKREAA.

Belongs to the binding-protein-dependent transport system permease family. AraH/RbsC subfamily. In terms of assembly, the complex is composed of two ATP-binding proteins (LsrA), two transmembrane proteins (LsrC and LsrD) and a solute-binding protein (LsrB).

The protein localises to the cell inner membrane. In terms of biological role, part of the ABC transporter complex LsrABCD involved in autoinducer 2 (AI-2) import. Probably responsible for the translocation of the substrate across the membrane. The protein is Autoinducer 2 import system permease protein LsrC (lsrC) of Escherichia coli O157:H7.